Consider the following 115-residue polypeptide: Thrombospondin type-1 domain-containing protein 8 (115 aa).

Residues 1–21 form the signal peptide; that stretch reads MARTPGALLLAPLLLLQLATP. Residues 53 to 104 form the TSP type-1 domain; the sequence is DSILGPWGKWRCLCDLGKQERSREVVGTAPGPVFMDPEKLIQLRPCRQRDCP.

The protein is Thrombospondin type-1 domain-containing protein 8 of Homo sapiens (Human).